Reading from the N-terminus, the 500-residue chain is MGPGGRQSAEPASTEVFGDSDFVVVANRLPVDQERLPDGTIAWKRSPGGLVTALEPLLRRRRGAWVGWAGVVENDVDVQDEPIVQDELQLQPVRLSADDVAQYYEGFSNATLWPLYHDVIVRPIYHREWWDRYVDVNRRFAEATARAAARGGTVWVQDYQLQLVPKMLRAMRPDLTIGFFLHIPFPPVELFMQLPWRTEIIQGLLGADLVGFHLPGGAQNFLILSRRLVGADTSRGTVGVRSRFGEVILGSRTIRVGAFPISIDSGALDQTARDRNIRRRSREIRAELGNPRKILLGVDRLDYTKGIDVRLKAFSELLAEGRVKRDDTVLVQLATPSRERVESYQTLRNDIERQVGHINGEYAEVGHPVVHYLHRPVPRNELIAFFVASDVMLVTPLRDGMNLVAKEYVACRSDLGGALVLSEFTGAAAELRHAYLVNPHDLEGVKDGIEEALNQTEEAGRRRMRSMRRQVLAHDVDRWARSFLDALADSRPNDSADAAD.

R28 is a binding site for D-glucose 6-phosphate. 48-49 (GG) contributes to the UDP-alpha-D-glucose binding site. Y104 and D158 together coordinate D-glucose 6-phosphate. Residues R300 and K305 each coordinate UDP-alpha-D-glucose. R338 contacts D-glucose 6-phosphate. 403–407 (LVAKE) lines the UDP-alpha-D-glucose pocket.

The protein belongs to the glycosyltransferase 20 family. As to quaternary structure, homotetramer.

The enzyme catalyses ADP-alpha-D-glucose + D-glucose 6-phosphate = alpha,alpha-trehalose 6-phosphate + ADP + H(+). It catalyses the reaction CDP-alpha-D-glucose + D-glucose 6-phosphate = alpha,alpha-trehalose 6-phosphate + CDP + H(+). The catalysed reaction is GDP-alpha-D-glucose + D-glucose 6-phosphate = alpha,alpha-trehalose 6-phosphate + GDP + H(+). It carries out the reaction TDP-alpha-D-glucose + D-glucose 6-phosphate = 5-methyl-UDP + alpha,alpha-trehalose 6-phosphate + H(+). The enzyme catalyses D-glucose 6-phosphate + UDP-alpha-D-glucose = alpha,alpha-trehalose 6-phosphate + UDP + H(+). It functions in the pathway glycan biosynthesis; trehalose biosynthesis. Functionally, probably involved in the osmoprotection via the biosynthesis of trehalose and in the production of glycogen and alpha-glucan via the TreS-Pep2 branch involved in the biosynthesis of maltose-1-phosphate (M1P). Catalyzes the transfer of glucose from UDP-glucose (UDP-Glc) to D-glucose 6-phosphate (Glc-6-P) to form trehalose-6-phosphate. Probably also able to use ADP-Glc, CDP-Glc, GDP-Glc and TDP-Glc as glucosyl donors. The chain is Trehalose-6-phosphate synthase from Mycobacterium marinum (strain ATCC BAA-535 / M).